A 216-amino-acid chain; its full sequence is Minor fimbrial subunit HifD (216 aa).

The first 19 residues, Met-1–Ser-19, serve as a signal peptide directing secretion. Residue Cys-20 is the site of N-palmitoyl cysteine attachment. Residue Cys-20 is the site of S-diacylglycerol cysteine attachment. The disordered stretch occupies residues Pro-159 to Asn-180.

The protein belongs to the fimbrial protein family.

The protein resides in the cell membrane. It localises to the fimbrium. Functionally, may be a minor structural protein required for pilus biogenesis. The polypeptide is Minor fimbrial subunit HifD (hifD) (Haemophilus influenzae).